The sequence spans 279 residues: 4-diphosphocytidyl-2-C-methyl-D-erythritol kinase (279 aa).

The active site involves Lys9. Position 93 to 103 (Pro93 to Ser103) interacts with ATP. Asp135 is a catalytic residue.

This sequence belongs to the GHMP kinase family. IspE subfamily.

It catalyses the reaction 4-CDP-2-C-methyl-D-erythritol + ATP = 4-CDP-2-C-methyl-D-erythritol 2-phosphate + ADP + H(+). Its pathway is isoprenoid biosynthesis; isopentenyl diphosphate biosynthesis via DXP pathway; isopentenyl diphosphate from 1-deoxy-D-xylulose 5-phosphate: step 3/6. In terms of biological role, catalyzes the phosphorylation of the position 2 hydroxy group of 4-diphosphocytidyl-2C-methyl-D-erythritol. This is 4-diphosphocytidyl-2-C-methyl-D-erythritol kinase from Acinetobacter baylyi (strain ATCC 33305 / BD413 / ADP1).